The primary structure comprises 260 residues: Phosphate import ATP-binding protein PstB (260 aa).

In terms of domain architecture, ABC transporter spans 14–255; sequence LQIRNLDFFY…PGKKQTEDYI (242 aa). ATP is bound at residue 46–53; it reads GPSGCGKS.

Belongs to the ABC transporter superfamily. Phosphate importer (TC 3.A.1.7) family. In terms of assembly, the complex is composed of two ATP-binding proteins (PstB), two transmembrane proteins (PstC and PstA) and a solute-binding protein (PstS).

It is found in the cell inner membrane. The enzyme catalyses phosphate(out) + ATP + H2O = ADP + 2 phosphate(in) + H(+). Part of the ABC transporter complex PstSACB involved in phosphate import. Responsible for energy coupling to the transport system. The chain is Phosphate import ATP-binding protein PstB from Thiobacillus denitrificans (strain ATCC 25259 / T1).